The following is a 340-amino-acid chain: Guanine nucleotide-binding protein G(I)/G(S)/G(T) subunit beta-3 (340 aa).

WD repeat units lie at residues 53–83 (GHLAKIYAMHWATDSKLLVSASQDGKLIVWD), 95–125 (LRSSWVMTCAYAPSGNFVACGGLDNMCSIYS), 141–170 (AHTGYLSCCRFLDDNNIVTSSGDTTCALWD), 182–212 (GHTGDCMSLAVSPDYKLFISGACDASAKLWD), 224–254 (GHESDINAICFFPNGEAICTGSDDASCRLFD), 268–298 (SIICGITSVAFSLSGRLLFAGYDDFNCNVWD), and 310–340 (GHDNRVSCLGVTADGMAVATGSWDSFLKIWN).

It belongs to the WD repeat G protein beta family. G proteins are composed of 3 units, alpha, beta and gamma. Interacts with RASD2. As to expression, expressed at a high level in the heart and at a much lower level in the brain.

Its function is as follows. Guanine nucleotide-binding proteins (G proteins) are involved as a modulator or transducer in various transmembrane signaling systems. The beta and gamma chains are required for the GTPase activity, for replacement of GDP by GTP, and for G protein-effector interaction. In Rattus norvegicus (Rat), this protein is Guanine nucleotide-binding protein G(I)/G(S)/G(T) subunit beta-3 (Gnb3).